The primary structure comprises 95 residues: Protein YY1 (95 aa).

Residues 1-26 form the signal peptide; the sequence is MAVTRTALLVVLVAGAMTMTMRGAEA. Intrachain disulfides connect C31–C72, C41–C61, C62–C87, and C74–C94.

This sequence belongs to the A9/FIL1 family. Anther.

It is found in the secreted. This chain is Protein YY1, found in Oryza sativa subsp. japonica (Rice).